The primary structure comprises 316 residues: Large ribosomal subunit protein uL4 (316 aa).

Residues 1-211 form a large ribosomal subunit protein uL4 region; it reads MASCVVKNWQ…EQLKARWGSD (211 aa). Disordered stretches follow at residues 44-76 and 231-316; these read ARQGNAHTKTRAEVRGGGRKPWKQKGTGRARAG and EDQA…ESDD. The segment covering 60-71 has biased composition (basic residues); the sequence is GGRKPWKQKGTG. Residues 212–316 form a unknown region; sequence AAPAVLETPS…TAPAEEESDD (105 aa). A compositionally biased stretch (low complexity) spans 255–270; that stretch reads QTPAQPEAQENQAALQ. Acidic residues-rich tracts occupy residues 281–291 and 301–316; these read EQTEEPQDPAE and TVEEAETAPAEEESDD.

The protein belongs to the universal ribosomal protein uL4 family. Part of the 50S ribosomal subunit.

Its function is as follows. One of the primary rRNA binding proteins, this protein initially binds near the 5'-end of the 23S rRNA. It is important during the early stages of 50S assembly. It makes multiple contacts with different domains of the 23S rRNA in the assembled 50S subunit and ribosome. Functionally, forms part of the polypeptide exit tunnel. This is Large ribosomal subunit protein uL4 from Synechococcus sp. (strain JA-2-3B'a(2-13)) (Cyanobacteria bacterium Yellowstone B-Prime).